A 477-amino-acid polypeptide reads, in one-letter code: Bifunctional protein HldE (477 aa).

Residues 1-318 form a ribokinase region; it reads MKVTLPEFER…ENAVRGRAET (318 aa). An ATP-binding site is contributed by 195–198; it reads NLSE. Asp264 is a catalytic residue. The tract at residues 344–477 is cytidylyltransferase; the sequence is MTNGVFDILH…IKKIQKDSDK (134 aa).

In the N-terminal section; belongs to the carbohydrate kinase PfkB family. The protein in the C-terminal section; belongs to the cytidylyltransferase family. Homodimer.

The enzyme catalyses D-glycero-beta-D-manno-heptose 7-phosphate + ATP = D-glycero-beta-D-manno-heptose 1,7-bisphosphate + ADP + H(+). It catalyses the reaction D-glycero-beta-D-manno-heptose 1-phosphate + ATP + H(+) = ADP-D-glycero-beta-D-manno-heptose + diphosphate. The protein operates within nucleotide-sugar biosynthesis; ADP-L-glycero-beta-D-manno-heptose biosynthesis; ADP-L-glycero-beta-D-manno-heptose from D-glycero-beta-D-manno-heptose 7-phosphate: step 1/4. It functions in the pathway nucleotide-sugar biosynthesis; ADP-L-glycero-beta-D-manno-heptose biosynthesis; ADP-L-glycero-beta-D-manno-heptose from D-glycero-beta-D-manno-heptose 7-phosphate: step 3/4. Its function is as follows. Catalyzes the phosphorylation of D-glycero-D-manno-heptose 7-phosphate at the C-1 position to selectively form D-glycero-beta-D-manno-heptose-1,7-bisphosphate. In terms of biological role, catalyzes the ADP transfer from ATP to D-glycero-beta-D-manno-heptose 1-phosphate, yielding ADP-D-glycero-beta-D-manno-heptose. In Klebsiella pneumoniae subsp. pneumoniae (strain ATCC 700721 / MGH 78578), this protein is Bifunctional protein HldE.